The primary structure comprises 263 residues: Thiazole synthase (263 aa).

Lysine 100 (schiff-base intermediate with DXP) is an active-site residue. 1-deoxy-D-xylulose 5-phosphate contacts are provided by residues glycine 161, 188–189, and 210–211; these read AG and NS.

It belongs to the ThiG family. As to quaternary structure, homotetramer. Forms heterodimers with either ThiH or ThiS.

It is found in the cytoplasm. The catalysed reaction is [ThiS sulfur-carrier protein]-C-terminal-Gly-aminoethanethioate + 2-iminoacetate + 1-deoxy-D-xylulose 5-phosphate = [ThiS sulfur-carrier protein]-C-terminal Gly-Gly + 2-[(2R,5Z)-2-carboxy-4-methylthiazol-5(2H)-ylidene]ethyl phosphate + 2 H2O + H(+). It functions in the pathway cofactor biosynthesis; thiamine diphosphate biosynthesis. In terms of biological role, catalyzes the rearrangement of 1-deoxy-D-xylulose 5-phosphate (DXP) to produce the thiazole phosphate moiety of thiamine. Sulfur is provided by the thiocarboxylate moiety of the carrier protein ThiS. In vitro, sulfur can be provided by H(2)S. The sequence is that of Thiazole synthase from Pseudoalteromonas translucida (strain TAC 125).